A 269-amino-acid chain; its full sequence is 3-methyl-2-oxobutanoate hydroxymethyltransferase (269 aa).

The Mg(2+) site is built by Asp-42 and Asp-81. 3-methyl-2-oxobutanoate contacts are provided by residues 42-43 (DS), Asp-81, and Lys-111. Residue Glu-113 coordinates Mg(2+). Catalysis depends on Glu-179, which acts as the Proton acceptor. Positions 250 to 269 (SGEFPRESHSHTEDELDDLY) are disordered. The segment covering 252–262 (EFPRESHSHTE) has biased composition (basic and acidic residues).

It belongs to the PanB family. Homodecamer; pentamer of dimers. Requires Mg(2+) as cofactor.

The protein resides in the cytoplasm. It carries out the reaction 3-methyl-2-oxobutanoate + (6R)-5,10-methylene-5,6,7,8-tetrahydrofolate + H2O = 2-dehydropantoate + (6S)-5,6,7,8-tetrahydrofolate. Its pathway is cofactor biosynthesis; coenzyme A biosynthesis. Catalyzes the reversible reaction in which hydroxymethyl group from 5,10-methylenetetrahydrofolate is transferred onto alpha-ketoisovalerate to form ketopantoate. The sequence is that of 3-methyl-2-oxobutanoate hydroxymethyltransferase from Haloarcula marismortui (strain ATCC 43049 / DSM 3752 / JCM 8966 / VKM B-1809) (Halobacterium marismortui).